The primary structure comprises 136 residues: Probable 5-hydroxyisourate hydrolase ZK697.8 (136 aa).

Positions Met-1–Ala-19 are cleaved as a signal peptide. The substrate site is built by His-31, Arg-69, and Tyr-133.

It belongs to the transthyretin family. 5-hydroxyisourate hydrolase subfamily. As to quaternary structure, homotetramer.

It carries out the reaction 5-hydroxyisourate + H2O = 5-hydroxy-2-oxo-4-ureido-2,5-dihydro-1H-imidazole-5-carboxylate + H(+). Catalyzes the hydrolysis of 5-hydroxyisourate (HIU) to 2-oxo-4-hydroxy-4-carboxy-5-ureidoimidazoline (OHCU). This chain is Probable 5-hydroxyisourate hydrolase ZK697.8, found in Caenorhabditis elegans.